We begin with the raw amino-acid sequence, 247 residues long: Adenosylcobinamide-GDP ribazoletransferase (247 aa).

A run of 5 helical transmembrane segments spans residues 34 to 54, 59 to 79, 113 to 133, 138 to 158, and 194 to 214; these read IITFPLIGLLLGAISGLVFMV, CGVPLAALFSVLVLALMTGGF, GGLALIFVVLAKILVLSELAL, ILASLAAACAVSRGIAALLMY, and VLLPGMHGVAAMVVTMVAIFI.

It belongs to the CobS family. Requires Mg(2+) as cofactor.

It is found in the cell inner membrane. The catalysed reaction is alpha-ribazole + adenosylcob(III)inamide-GDP = adenosylcob(III)alamin + GMP + H(+). The enzyme catalyses alpha-ribazole 5'-phosphate + adenosylcob(III)inamide-GDP = adenosylcob(III)alamin 5'-phosphate + GMP + H(+). The protein operates within cofactor biosynthesis; adenosylcobalamin biosynthesis; adenosylcobalamin from cob(II)yrinate a,c-diamide: step 7/7. Its function is as follows. Joins adenosylcobinamide-GDP and alpha-ribazole to generate adenosylcobalamin (Ado-cobalamin). Also synthesizes adenosylcobalamin 5'-phosphate from adenosylcobinamide-GDP and alpha-ribazole 5'-phosphate. This chain is Adenosylcobinamide-GDP ribazoletransferase, found in Shigella dysenteriae serotype 1 (strain Sd197).